A 291-amino-acid polypeptide reads, in one-letter code: 4-diphosphocytidyl-2-C-methyl-D-erythritol kinase (291 aa).

K10 is an active-site residue. 99–109 (PMGGGLGGGSS) is an ATP binding site. D141 is a catalytic residue.

It belongs to the GHMP kinase family. IspE subfamily. Homodimer.

The catalysed reaction is 4-CDP-2-C-methyl-D-erythritol + ATP = 4-CDP-2-C-methyl-D-erythritol 2-phosphate + ADP + H(+). The protein operates within isoprenoid biosynthesis; isopentenyl diphosphate biosynthesis via DXP pathway; isopentenyl diphosphate from 1-deoxy-D-xylulose 5-phosphate: step 3/6. In terms of biological role, catalyzes the phosphorylation of the position 2 hydroxy group of 4-diphosphocytidyl-2C-methyl-D-erythritol. This is 4-diphosphocytidyl-2-C-methyl-D-erythritol kinase from Proteus mirabilis (strain HI4320).